Reading from the N-terminus, the 181-residue chain is Der GTPase-activating protein YihI (181 aa).

2 disordered regions span residues 1-75 and 145-181; these read MSRK…KKIP and EPEAEEEFEEEAPVRKSRSDDDLLADFEDFDMDDYKG. The span at 32–43 shows a compositional bias: basic residues; the sequence is RLRKKDKKRKGL. Acidic residues predominate over residues 146–155; it reads PEAEEEFEEE. The segment covering 156 to 165 has biased composition (basic and acidic residues); that stretch reads APVRKSRSDD. The span at 166 to 181 shows a compositional bias: acidic residues; the sequence is DLLADFEDFDMDDYKG.

Belongs to the YihI family. Interacts with Der.

A GTPase-activating protein (GAP) that modifies Der/EngA GTPase function. May play a role in ribosome biogenesis. This is Der GTPase-activating protein YihI from Vibrio vulnificus (strain CMCP6).